Here is a 639-residue protein sequence, read N- to C-terminus: MAKENSSHSLAEAKRKRLTWILCVSGLCILSYVLGSWQTNTVPTSSSEAYSRMGCDETSTTTRAQTTQTQTNPSSDDTSSSLSSSEPVELDFESHHKLELKITNQTVKYFEPCDMSLSEYTPCEDRERGRRFDRNMMKYRERHCPSKDELLYCLIPPPPNYKIPFKWPQSRDYAWYDNIPHKELSIEKAIQNWIQVEGERFRFPGGGTMFPRGADAYIDDIARLIPLTDGAIRTAIDTGCGVASFGAYLLKRDIVAMSFAPRDTHEAQVQFALERGVPAIIGIMGSRRLPYPARAFDLAHCSRCLIPWFQNDGLYLTEVDRVLRPGGYWILSGPPINWKKYWKGWERSQEDLKQEQDSIEDAARSLCWKKVTEKGDLSIWQKPINHVECNKLKRVHKTPPLCSKSDLPDFAWYKDLESCVTPLPEANSSDEFAGGALEDWPNRAFAVPPRIIGGTIPDINAEKFREDNEVWKERISYYKQIMPELSRGRFRNIMDMNAYLGGFAAAMMKYPSWVMNVVPVDAEKQTLGVIFERGFIGTYQDWCEGFSTYPRTYDLIHAGGLFSIYENRCDVTLILLEMDRILRPEGTVVFRDTVEMLTKIQSITNGMRWKSRILDHERGPFNPEKILLAVKSYWTGPSS.

Topologically, residues 1–19 are cytoplasmic; that stretch reads MAKENSSHSLAEAKRKRLT. A helical; Signal-anchor for type II membrane protein membrane pass occupies residues 20 to 42; sequence WILCVSGLCILSYVLGSWQTNTV. Residues 41-86 are disordered; the sequence is TVPTSSSEAYSRMGCDETSTTTRAQTTQTQTNPSSDDTSSSLSSSE. At 43–639 the chain is on the lumenal side; it reads PTSSSEAYSR…VKSYWTGPSS (597 aa). A compositionally biased stretch (low complexity) spans 58-85; it reads TSTTTRAQTTQTQTNPSSDDTSSSLSSS. N-linked (GlcNAc...) asparagine glycosylation is found at N104 and N427.

This sequence belongs to the methyltransferase superfamily.

The protein resides in the endoplasmic reticulum membrane. In Arabidopsis thaliana (Mouse-ear cress), this protein is Probable methyltransferase PMT18.